A 342-amino-acid chain; its full sequence is Probable deoxyhypusine synthase (342 aa).

Lys-307 functions as the Nucleophile in the catalytic mechanism.

Belongs to the deoxyhypusine synthase family. Requires NAD(+) as cofactor.

It catalyses the reaction [eIF5A protein]-L-lysine + spermidine = [eIF5A protein]-deoxyhypusine + propane-1,3-diamine. Its pathway is protein modification; eIF5A hypusination. Catalyzes the NAD-dependent oxidative cleavage of spermidine and the subsequent transfer of the butylamine moiety of spermidine to the epsilon-amino group of a specific lysine residue of the eIF-5A precursor protein to form the intermediate deoxyhypusine residue. The protein is Probable deoxyhypusine synthase (dys) of Pyrococcus horikoshii (strain ATCC 700860 / DSM 12428 / JCM 9974 / NBRC 100139 / OT-3).